A 358-amino-acid polypeptide reads, in one-letter code: Small ribosomal subunit biogenesis GTPase RsgA (358 aa).

The region spanning 76–234 (STEIDRPAVA…LADSPGFNQP (159 aa)) is the CP-type G domain. GTP is bound by residues 125 to 128 (NKID) and 176 to 184 (GPSGVGKSS). Zn(2+)-binding residues include Cys259, Cys264, His266, and Cys272. The interval 319-358 (TYEPKLANKKYRRPSRRGKNQDQERYENKTLQDIYNDDSE) is disordered. A compositionally biased stretch (basic residues) spans 325–336 (ANKKYRRPSRRG). Basic and acidic residues predominate over residues 337 to 348 (KNQDQERYENKT).

The protein belongs to the TRAFAC class YlqF/YawG GTPase family. RsgA subfamily. Monomer. Associates with 30S ribosomal subunit, binds 16S rRNA. Requires Zn(2+) as cofactor.

The protein localises to the cytoplasm. Its function is as follows. One of several proteins that assist in the late maturation steps of the functional core of the 30S ribosomal subunit. Helps release RbfA from mature subunits. May play a role in the assembly of ribosomal proteins into the subunit. Circularly permuted GTPase that catalyzes slow GTP hydrolysis, GTPase activity is stimulated by the 30S ribosomal subunit. The polypeptide is Small ribosomal subunit biogenesis GTPase RsgA (Microcystis aeruginosa (strain NIES-843 / IAM M-2473)).